We begin with the raw amino-acid sequence, 739 residues long: Polyribonucleotide nucleotidyltransferase (739 aa).

2 residues coordinate Mg(2+): Asp487 and Asp493. In terms of domain architecture, KH spans 554–613 (PRIETMQIPTDKIRDVIGTGGKVIREIVEKTGAKINIEDTGVVKIASADGKAIKAAYNWI). An S1 motif domain is found at 623-691 (GVIYDGTIVK…DRGKIRLSMK (69 aa)). Positions 694 to 739 (DQQTGEDITDKIKAQRDAERAERGDEPREPREGGRHRGERRREAGE) are disordered. Positions 701-739 (ITDKIKAQRDAERAERGDEPREPREGGRHRGERRREAGE) are enriched in basic and acidic residues.

The protein belongs to the polyribonucleotide nucleotidyltransferase family. The cofactor is Mg(2+).

It localises to the cytoplasm. The catalysed reaction is RNA(n+1) + phosphate = RNA(n) + a ribonucleoside 5'-diphosphate. Its function is as follows. Involved in mRNA degradation. Catalyzes the phosphorolysis of single-stranded polyribonucleotides processively in the 3'- to 5'-direction. The sequence is that of Polyribonucleotide nucleotidyltransferase from Methylobacterium radiotolerans (strain ATCC 27329 / DSM 1819 / JCM 2831 / NBRC 15690 / NCIMB 10815 / 0-1).